Here is a 178-residue protein sequence, read N- to C-terminus: Large ribosomal subunit protein uL6 (178 aa).

Belongs to the universal ribosomal protein uL6 family. In terms of assembly, part of the 50S ribosomal subunit.

Its function is as follows. This protein binds to the 23S rRNA, and is important in its secondary structure. It is located near the subunit interface in the base of the L7/L12 stalk, and near the tRNA binding site of the peptidyltransferase center. This is Large ribosomal subunit protein uL6 from Lactiplantibacillus plantarum (strain ATCC BAA-793 / NCIMB 8826 / WCFS1) (Lactobacillus plantarum).